The primary structure comprises 585 residues: Aspartate--tRNA ligase (585 aa).

Glu-169 contacts L-aspartate. The interval 193 to 196 is aspartate; that stretch reads QLFK. Arg-215 is a binding site for L-aspartate. ATP-binding positions include 215-217 and Gln-224; that span reads RDE. His-443 provides a ligand contact to L-aspartate. Glu-478 provides a ligand contact to ATP. Arg-485 contacts L-aspartate. 530 to 533 provides a ligand contact to ATP; the sequence is GLDR.

The protein belongs to the class-II aminoacyl-tRNA synthetase family. Type 1 subfamily. Homodimer.

Its subcellular location is the cytoplasm. It catalyses the reaction tRNA(Asp) + L-aspartate + ATP = L-aspartyl-tRNA(Asp) + AMP + diphosphate. Its function is as follows. Catalyzes the attachment of L-aspartate to tRNA(Asp) in a two-step reaction: L-aspartate is first activated by ATP to form Asp-AMP and then transferred to the acceptor end of tRNA(Asp). This Pseudothermotoga lettingae (strain ATCC BAA-301 / DSM 14385 / NBRC 107922 / TMO) (Thermotoga lettingae) protein is Aspartate--tRNA ligase.